We begin with the raw amino-acid sequence, 436 residues long: Anaerobic glycerol-3-phosphate dehydrogenase subunit B (436 aa).

It belongs to the anaerobic G-3-P dehydrogenase subunit B family. In terms of assembly, composed of a catalytic GlpA/B dimer and of membrane bound GlpC. FMN is required as a cofactor.

It catalyses the reaction a quinone + sn-glycerol 3-phosphate = dihydroxyacetone phosphate + a quinol. Its pathway is polyol metabolism; glycerol degradation via glycerol kinase pathway; glycerone phosphate from sn-glycerol 3-phosphate (anaerobic route): step 1/1. Functionally, conversion of glycerol 3-phosphate to dihydroxyacetone. Uses fumarate or nitrate as electron acceptor. The sequence is that of Anaerobic glycerol-3-phosphate dehydrogenase subunit B from Vibrio cholerae serotype O1 (strain M66-2).